Reading from the N-terminus, the 232-residue chain is tRNA (guanine-N(1)-)-methyltransferase (232 aa).

Residues Gly-111 and 131 to 136 (IGDYIL) each bind S-adenosyl-L-methionine.

Belongs to the RNA methyltransferase TrmD family. In terms of assembly, homodimer.

It is found in the cytoplasm. The enzyme catalyses guanosine(37) in tRNA + S-adenosyl-L-methionine = N(1)-methylguanosine(37) in tRNA + S-adenosyl-L-homocysteine + H(+). In terms of biological role, specifically methylates guanosine-37 in various tRNAs. The polypeptide is tRNA (guanine-N(1)-)-methyltransferase (Bartonella bacilliformis (strain ATCC 35685 / KC583 / Herrer 020/F12,63)).